The chain runs to 668 residues: MDKEAAKRRIEELHEILNQYNYEYHTLDRPSVPDAEYDARMRELISLEEEHPDLKAADSPSQRVGGAVLDAFQKVRHGTPMLSLGNAFNEQDLLDFDRRVRQAVGDDIAYNVELKIDGLAVSLRYENGVFVRGATRGDGTTGEDITENLKTIRSIPLKIKRPLSIEVRGEAFMPKPSFEALNEKRLQNEEEPFANPRNAAAGSLRQLDTKIAAKRNLDIFVYSIAELDEIGVESQSEGLDLLDELGFKTNKERRTCQTIEEVIELIETLKTKRADFSYEIDGIVIKVDSLAQQEELGFTAKSPRWAVAYKFPAEEVVTKLLDIELSVGRTGVITPTAILEPVKVAGTTVQRASLHNEDLIKEKDIRLLDQVIVKKAGDIIPEVAGVLIDQRTGEEKPFHMPTECPECHSELVRIEGEVALRCINPECPAQIREGLIHFVSRNAMNIDGLGERVITQLFKEQLVSRVSDLYRLTKEELIQLERMGEKSVENLLRSIEQSKENSLERLLFGLGIRFIGSKAAKTLALHFGDIDQLKQATKEQLLEVDEIGEKMADAVVTYFEKEEILNLLNELKELGVNMTYTGPKPVKVEESDSYFAGKTIVLTGKLEEMARNDAKAAIEALGGKLAGSVSKKTDLVIAGEAAGSKLTKAEELNIEIWDEVKMLEELKK.

NAD(+) is bound by residues Asp-34–Asp-38, Ser-83–Leu-84, and Glu-113. The N6-AMP-lysine intermediate role is filled by Lys-115. NAD(+) contacts are provided by Arg-136, Glu-170, Lys-286, and Lys-310. Zn(2+)-binding residues include Cys-404, Cys-407, Cys-422, and Cys-427. The 79-residue stretch at Glu-590 to Lys-668 folds into the BRCT domain.

This sequence belongs to the NAD-dependent DNA ligase family. LigA subfamily. It depends on Mg(2+) as a cofactor. Mn(2+) serves as cofactor.

The enzyme catalyses NAD(+) + (deoxyribonucleotide)n-3'-hydroxyl + 5'-phospho-(deoxyribonucleotide)m = (deoxyribonucleotide)n+m + AMP + beta-nicotinamide D-nucleotide.. Its function is as follows. DNA ligase that catalyzes the formation of phosphodiester linkages between 5'-phosphoryl and 3'-hydroxyl groups in double-stranded DNA using NAD as a coenzyme and as the energy source for the reaction. It is essential for DNA replication and repair of damaged DNA. This chain is DNA ligase, found in Bacillus pumilus (strain SAFR-032).